We begin with the raw amino-acid sequence, 350 residues long: Biotin synthase (350 aa).

One can recognise a Radical SAM core domain in the interval N42–R269. Positions 57, 61, and 64 each coordinate [4Fe-4S] cluster. [2Fe-2S] cluster is bound by residues C101, C132, C192, and R264.

This sequence belongs to the radical SAM superfamily. Biotin synthase family. As to quaternary structure, homodimer. The cofactor is [4Fe-4S] cluster. [2Fe-2S] cluster serves as cofactor.

The catalysed reaction is (4R,5S)-dethiobiotin + (sulfur carrier)-SH + 2 reduced [2Fe-2S]-[ferredoxin] + 2 S-adenosyl-L-methionine = (sulfur carrier)-H + biotin + 2 5'-deoxyadenosine + 2 L-methionine + 2 oxidized [2Fe-2S]-[ferredoxin]. The protein operates within cofactor biosynthesis; biotin biosynthesis; biotin from 7,8-diaminononanoate: step 2/2. Functionally, catalyzes the conversion of dethiobiotin (DTB) to biotin by the insertion of a sulfur atom into dethiobiotin via a radical-based mechanism. In Saccharophagus degradans (strain 2-40 / ATCC 43961 / DSM 17024), this protein is Biotin synthase.